The chain runs to 382 residues: SOX domain-containing protein dichaete (382 aa).

2 disordered regions span residues 53 to 142 and 346 to 382; these read GGSP…EGHI and YPSS…PVLY. Gly residues predominate over residues 60–69; it reads AGQGVNGSSG. Residues 96–123 are compositionally biased toward low complexity; the sequence is NSSIGSAGSLGSQSSLGSNGSGLNSSSG. Positions 142–210 form a DNA-binding region, HMG box; it reads IKRPMNAFMV…LHMKEHPDYK (69 aa). Low complexity predominate over residues 347 to 360; that stretch reads PSSSTSSPGSSPGT.

As to expression, initially expressed in a pair-rule-like pattern which is rapidly replaced by strong neuroectoderm expression.

The protein localises to the nucleus. Functionally, essential for segmentation and CNS development. May modulate the actions of other transcription factors, including gap and pair-rule proteins. The sequence is that of SOX domain-containing protein dichaete (D) from Drosophila melanogaster (Fruit fly).